A 934-amino-acid chain; its full sequence is MDFPNLVLSAKNSIQNVDSKDEKQKIIDQLISDIRGQNDGVIPDEVLSEIQQVAEINGLSFNYEKPVKQELLEQPDPTSVLSQEVFQIRTILSKTLFVDVEAEDYSVYIPDETSNLSPVQIDARPIQTYQPKALMYKDTAILPSNRDEVSDQYGADEILFDSHMFNDISQAQIRDFETYVLDKAMQIQSSLPNLDFVSSLDKEVNPFNVHNTLCLNFGQREYYNIIADRTNQSFQQRRQSVQFDNVVVDGVARRARVSLRLHPFDSQLLDIIRFNTIQDQPLADTMAEYQLVAADGFVATPRFRTDRDARLIADVRSRVMARLCELSPYFHRTRILSSMTDFNSLWKVNVFSSSIDNAKDAIYRMAEISFTVADATTSALSSVNIASAQQTLLVLLNMSLFRFEIEPVGSQSNFGAAVSAALMLVVFPTDEASMSNVTFDNLCNLVFNELIAWTVDRPTFVKRTGMTNAFEANVNIGGGNMTRDITAYMRFVLLRRPWAVFQRTYDDQYVADIMVPNIDEANVNDQSYMAINNLFSGLIQAAQRNPNPGRQIAATSFRKLLKSMKDSCCNRIMPLIRLMKYNVERIARIYRFFPYTADLVQRIPAFRDERIRIKVPVSGMLSIALGINKSPDVFDWYNLLRFADVIRTKNFAERQSLESIMVQALIRNDINPARSRKEYIQQNIKPATNVVASITKVPSATFTTILSDRMLNNEIRRTQSYIVVNRIRDAVRAAFEHVPTAEHGIAKGALLLPYPQNFQRSSVYVRKDNILYNAPVGVDRFSLDDLLNGRFYQGMVNRIQNMSPFVIAGPLQVRASNASAIDSVTSAYLTMSSPYDACVKPEDLRHNRIVQPPIVDFFSDSSITRPNTQFEQLMSKTSVFVIDAPKLIVQSDATVYNFDYRDIQLTTSVVDKLEFTSVKTPDVTLFNGMLVFED.

The protein belongs to the rotavirus VP2 family. As to quaternary structure, homodecamer; each decamer is made up of two conformers of VP2, called VP2A and VP2B. Interacts with a VP1-VP3 complex. Interacts with the intermediate capsid protein VP6. Interacts with NSP5. Interacts (via N-terminus) with NSP2.

The protein localises to the virion. In terms of biological role, inner capsid protein that self-assembles to form an icosahedral capsid with a T=2 symmetry, which consists of 120 copies of VP2, with channels at each of its five-fold vertices. This capsid constitutes the innermost concentric layer of the viral mature particle. It encapsidates the polymerase VP1, the capping enzyme VP3 and the genomic dsRNA, thereby defining the core. The innermost VP2 capsid and the intermediate VP6 capsid remain intact following cell entry to protect the dsRNA from degradation and to prevent unfavorable antiviral responses in the host cell during all the replication cycle of the virus. Nascent transcripts are transcribed within the structural confines of this double-layered particle (DLP) and are extruded through the channels formed by VP2 N-termini. VP2 is required for the replicase activity of VP1 polymerase. Probably recruits a copy of a VP1-VP3 complex, potentially along with a segment of plus-strand RNA, as a decamer of VP2 assembles. May activate the autoinhibited VP1/RNA complex to coordinate packaging and genome replication. This chain is Inner capsid protein VP2, found in Rotavirus B (isolate RVB/Rat/United States/IDIR/1984/G1P[X]) (RV-B).